Consider the following 149-residue polypeptide: Probable calcium-binding protein CML25/26 (149 aa).

EF-hand domains follow at residues 1 to 35, 37 to 72, 77 to 113, and 117 to 149; these read MASS…ALGE, VSEE…HQLQ, ESLR…LGSE, and LEME…MLMA. Ca(2+) is bound by residues aspartate 13, aspartate 15, aspartate 17, lysine 19, glutamate 24, aspartate 50, aspartate 52, aspartate 54, and glutamate 61. Residues aspartate 130, asparagine 132, aspartate 134, and glutamate 141 each coordinate Ca(2+).

Functionally, potential calcium sensor. The polypeptide is Probable calcium-binding protein CML25/26 (CML25) (Oryza sativa subsp. japonica (Rice)).